The sequence spans 683 residues: Transcription factor SFP1 (683 aa).

Disordered stretches follow at residues 156-178, 305-324, 332-357, 399-420, 498-517, and 535-573; these read ATNTLQIQQPTKRPSVSNPPYHR, DSNSTIRQSQHPHHQQNIIQ, VNHTSGAVPTPSVMGSATASSTTANP, SNSPSRHVPHNKQINSNNNSGI, HNSMNSVVNPTTGSHNYNTF, and IDDIDDDDDVDDDDDDDDDDDTENGSSSNGKSVHNNNYK. A compositionally biased stretch (polar residues) spans 160–173; it reads LQIQQPTKRPSVSN. Positions 230–458 are prion domain (PrD); that stretch reads NTTNMSQIPM…NYSLNKTSRN (229 aa). Residues 535–557 are compositionally biased toward acidic residues; that stretch reads IDDIDDDDDVDDDDDDDDDDDTE. Residues 558 to 573 are compositionally biased toward polar residues; it reads NGSSSNGKSVHNNNYK. C2H2-type zinc fingers lie at residues 598-623 and 659-683; these read FKCPVIGCEKTYKNQNGLKYHRLHGH and YRCEVCGKRYKNLNGLKYHRGHSTH.

Interacts with the target of rapamycin complex 1 (TORC1) in a rapamycin-dependent manner. Interacts with MRS6. Post-translationally, phosphorylated by TORC1 kinase at multiple sites. Phosphorylation regulates nuclear localization and RP promoter binding.

Its subcellular location is the cytoplasm. It is found in the nucleus. Its function is as follows. Transcription factor that regulates ribosomal protein (RP) and ribosome biogenesis (Ribi) gene expression in response to nutrients and stress. Promotes RP gene expression under optimal growth conditions. Leaves the nucleus upon environmental challenges, resulting in a down-regulation of RP gene transcription. The effect of the environmental cues on SFP1 localization is mediated through the TOR pathway. Also regulates the expression of genes involved in the G2/M transition during the mitotic cell cycle and the DNA-damage response. Required for carbon-source modulation of cell size. This Saccharomyces cerevisiae (strain ATCC 204508 / S288c) (Baker's yeast) protein is Transcription factor SFP1 (SFP1).